A 207-amino-acid chain; its full sequence is N-(5'-phosphoribosyl)anthranilate isomerase (207 aa).

This sequence belongs to the TrpF family.

It catalyses the reaction N-(5-phospho-beta-D-ribosyl)anthranilate = 1-(2-carboxyphenylamino)-1-deoxy-D-ribulose 5-phosphate. The protein operates within amino-acid biosynthesis; L-tryptophan biosynthesis; L-tryptophan from chorismate: step 3/5. In Petrotoga mobilis (strain DSM 10674 / SJ95), this protein is N-(5'-phosphoribosyl)anthranilate isomerase.